Consider the following 160-residue polypeptide: Protransforming growth factor alpha (160 aa).

Residues 1-23 (MVPSAGQFALFALGILLAVCQAL) form the signal peptide. Positions 24–39 (ENSTSALSADPPIAAA) are cleaved as a propeptide — removed in mature form. Over 24-98 (ENSTSALSAD…AVVAASQKKQ (75 aa)) the chain is Extracellular. Asn-25 carries N-linked (GlcNAc...) asparagine glycosylation. Positions 43 to 83 (HFNDCPDSHSQFCFHGTCRFLVQEDKPACVCHSGYVGARCE) constitute an EGF-like domain. Cystine bridges form between Cys-47–Cys-60, Cys-55–Cys-71, and Cys-73–Cys-82. Positions 90-160 (VVAASQKKQA…TACCHSETVV (71 aa)) are cleaved as a propeptide — removed in mature form. The helical transmembrane segment at 99–124 (AITALVVVSIVALAVLIITCVLIHCC) threads the bilayer. The Cytoplasmic portion of the chain corresponds to 125 to 160 (QVRKHCEWCRALICRHEKPSALLKGRTACCHSETVV). Residues Cys-153 and Cys-154 are each lipidated (S-palmitoyl cysteine).

As to quaternary structure, interacts with the PDZ domains of MAGI3, SDCBP and SNTA1. The interaction with SDCBP, is required for the targeting to the cell surface. In the endoplasmic reticulum, in its immature form (i.e. with a prosegment and lacking full N-glycosylation), interacts with CNIH. In the Golgi apparatus, may form a complex with CNIH and GORASP2. Interacts (via cytoplasmic C-terminal domain) with NKD2.

The protein resides in the secreted. The protein localises to the extracellular space. It is found in the cell membrane. TGF alpha is a mitogenic polypeptide that is able to bind to the EGF receptor/EGFR and to act synergistically with TGF beta to promote anchorage-independent cell proliferation in soft agar. In Sus scrofa (Pig), this protein is Protransforming growth factor alpha (TGFA).